A 206-amino-acid chain; its full sequence is Small ribosomal subunit protein uS4 (206 aa).

The S4 RNA-binding domain maps to 96 to 156; it reads GRLDNVVYRM…EKSKKQARIK (61 aa).

The protein belongs to the universal ribosomal protein uS4 family. Part of the 30S ribosomal subunit. Contacts protein S5. The interaction surface between S4 and S5 is involved in control of translational fidelity.

Functionally, one of the primary rRNA binding proteins, it binds directly to 16S rRNA where it nucleates assembly of the body of the 30S subunit. With S5 and S12 plays an important role in translational accuracy. The protein is Small ribosomal subunit protein uS4 of Mannheimia succiniciproducens (strain KCTC 0769BP / MBEL55E).